Consider the following 364-residue polypeptide: tRNA 2-selenouridine synthase (364 aa).

The 124-residue stretch at 14–137 (LIADTPIIDV…LRQTAIQATI (124 aa)) folds into the Rhodanese domain. Catalysis depends on cysteine 97, which acts as the S-selanylcysteine intermediate.

The protein belongs to the SelU family. In terms of assembly, monomer.

The catalysed reaction is 5-methylaminomethyl-2-thiouridine(34) in tRNA + selenophosphate + (2E)-geranyl diphosphate + H2O + H(+) = 5-methylaminomethyl-2-selenouridine(34) in tRNA + (2E)-thiogeraniol + phosphate + diphosphate. The enzyme catalyses 5-methylaminomethyl-2-thiouridine(34) in tRNA + (2E)-geranyl diphosphate = 5-methylaminomethyl-S-(2E)-geranyl-thiouridine(34) in tRNA + diphosphate. It catalyses the reaction 5-methylaminomethyl-S-(2E)-geranyl-thiouridine(34) in tRNA + selenophosphate + H(+) = 5-methylaminomethyl-2-(Se-phospho)selenouridine(34) in tRNA + (2E)-thiogeraniol. It carries out the reaction 5-methylaminomethyl-2-(Se-phospho)selenouridine(34) in tRNA + H2O = 5-methylaminomethyl-2-selenouridine(34) in tRNA + phosphate. Its function is as follows. Involved in the post-transcriptional modification of the uridine at the wobble position (U34) of tRNA(Lys), tRNA(Glu) and tRNA(Gln). Catalyzes the conversion of 2-thiouridine (S2U-RNA) to 2-selenouridine (Se2U-RNA). Acts in a two-step process involving geranylation of 2-thiouridine (S2U) to S-geranyl-2-thiouridine (geS2U) and subsequent selenation of the latter derivative to 2-selenouridine (Se2U) in the tRNA chain. The protein is tRNA 2-selenouridine synthase of Escherichia coli O81 (strain ED1a).